A 474-amino-acid chain; its full sequence is MTKPTTMAIFLSIVLLSMAQLPSLVAGTGRPRVIIIGAGISGISAGKRLSEAGITDILILEATDHIGGRMHKQRFAGVNVEIGANWVEGVNGEKMNPIWPIVNSTLKLRNFLSDFDSLAQNVYKDGGLCDAAYVQKRIDLADEADKSGENLSATLHPSGRDDMSILSMQRLNNHLPNGPSSPVDMVVDYFTYDYEFAEPPRVTSLRNTVPLPTFTDFGDDNYFVADQRGYEAVVYYLAGQYLEADKSGNIVDARLQLNKVVREISYSSTGVTVKTEDNSTYQADYVMVSASLGVLQSDLIQFKPQLPSWKILAIYQFDMAVYTKIFVKFPKKFWPEGAGREFFLYASTRRGYYGVWQEFEKQYPDANVLLVTVTDEESRRIEQQPDSQTKAEIMEVVRSMFPDEDVPDATDILVPRWWSDRFFQGSFSNWPIGVSRYEHDQLRAPVGRVYFTGEHTSERYNGYVHGAYLAGIYA.

The first 27 residues, 1 to 27 (MTKPTTMAIFLSIVLLSMAQLPSLVAG), serve as a signal peptide directing secretion. 2 residues coordinate FAD: glutamate 61 and arginine 69. 2 N-linked (GlcNAc...) asparagine glycosylation sites follow: asparagine 103 and asparagine 150. Residue valine 261 coordinates FAD. N-linked (GlcNAc...) asparagine glycosylation is present at asparagine 278. Glutamate 454 provides a ligand contact to FAD.

It belongs to the flavin monoamine oxidase family. The cofactor is FAD.

Its subcellular location is the secreted. The protein localises to the extracellular space. The protein resides in the apoplast. The enzyme catalyses spermine + O2 + H2O = 3-aminopropanal + spermidine + H2O2. The catalysed reaction is N(1)-acetylspermine + O2 + H2O = 3-acetamidopropanal + spermidine + H2O2. It catalyses the reaction norspermine + O2 + H2O = norspermidine + 3-aminopropanal + H2O2. It carries out the reaction spermidine + O2 + H2O = 3-aminopropanal + putrescine + H2O2. The enzyme catalyses N(1)-acetylspermidine + O2 + H2O = 3-acetamidopropanal + putrescine + H2O2. The catalysed reaction is thermospermine + O2 + H2O = 3-aminopropanal + spermidine + H2O2. It participates in amine and polyamine degradation; spermidine degradation. The protein operates within amine and polyamine degradation; spermine degradation. Its function is as follows. Flavoenzyme involved in polyamine back-conversion. Catalyzes the oxidation of the secondary amino group of polyamines, such as spermine, spermidine and their acetyl derivatives. Substrate preference is spermine &gt; spermidine &gt; N(1)-acetylspermine &gt; N(1)-acetylspermidine &gt; norspermine &gt; thermospermine. No activity detected when putrescine is used as substrate. May play a role in producing hydrogen peroxide for secondary wall thickening through lignin formation during anther development. This Oryza sativa subsp. japonica (Rice) protein is Polyamine oxidase 7.